Here is an 86-residue protein sequence, read N- to C-terminus: uncharacterized protein (86 aa).

A run of 2 helical transmembrane segments spans residues Ile-20–Leu-38 and Phe-47–Val-63. A disordered region spans residues Leu-67 to Glu-86. A compositionally biased stretch (basic and acidic residues) spans Gln-69–Glu-86.

It is found in the cell membrane. This is an uncharacterized protein from Haemophilus influenzae (strain ATCC 51907 / DSM 11121 / KW20 / Rd).